The following is an 860-amino-acid chain: Leucine--tRNA ligase (860 aa).

The 'HIGH' region signature appears at 42–52 (PYPSGRLHMGH). A 'KMSKS' region motif is present at residues 619–623 (KMSKS). Lys-622 serves as a coordination point for ATP.

This sequence belongs to the class-I aminoacyl-tRNA synthetase family.

The protein localises to the cytoplasm. The catalysed reaction is tRNA(Leu) + L-leucine + ATP = L-leucyl-tRNA(Leu) + AMP + diphosphate. This is Leucine--tRNA ligase from Shigella boydii serotype 18 (strain CDC 3083-94 / BS512).